The following is a 375-amino-acid chain: Succinyl-diaminopimelate desuccinylase (375 aa).

Residue H66 coordinates Zn(2+). D68 is an active-site residue. Residue D99 participates in Zn(2+) binding. E133 functions as the Proton acceptor in the catalytic mechanism. Zn(2+)-binding residues include E134, E162, and H348.

Belongs to the peptidase M20A family. DapE subfamily. As to quaternary structure, homodimer. Requires Zn(2+) as cofactor. It depends on Co(2+) as a cofactor.

It carries out the reaction N-succinyl-(2S,6S)-2,6-diaminopimelate + H2O = (2S,6S)-2,6-diaminopimelate + succinate. The protein operates within amino-acid biosynthesis; L-lysine biosynthesis via DAP pathway; LL-2,6-diaminopimelate from (S)-tetrahydrodipicolinate (succinylase route): step 3/3. Catalyzes the hydrolysis of N-succinyl-L,L-diaminopimelic acid (SDAP), forming succinate and LL-2,6-diaminopimelate (DAP), an intermediate involved in the bacterial biosynthesis of lysine and meso-diaminopimelic acid, an essential component of bacterial cell walls. The sequence is that of Succinyl-diaminopimelate desuccinylase from Cronobacter sakazakii (strain ATCC BAA-894) (Enterobacter sakazakii).